The sequence spans 430 residues: Enolase (430 aa).

A (2R)-2-phosphoglycerate-binding site is contributed by glutamine 163. Glutamate 205 (proton donor) is an active-site residue. Mg(2+) is bound by residues aspartate 242, glutamate 288, and aspartate 315. Residues lysine 340, arginine 369, serine 370, and lysine 391 each coordinate (2R)-2-phosphoglycerate. The active-site Proton acceptor is lysine 340.

Belongs to the enolase family. Mg(2+) serves as cofactor.

It is found in the cytoplasm. The protein resides in the secreted. The protein localises to the cell surface. It catalyses the reaction (2R)-2-phosphoglycerate = phosphoenolpyruvate + H2O. It functions in the pathway carbohydrate degradation; glycolysis; pyruvate from D-glyceraldehyde 3-phosphate: step 4/5. Its function is as follows. Catalyzes the reversible conversion of 2-phosphoglycerate (2-PG) into phosphoenolpyruvate (PEP). It is essential for the degradation of carbohydrates via glycolysis. The polypeptide is Enolase (Onion yellows phytoplasma (strain OY-M)).